Consider the following 117-residue polypeptide: Ig heavy chain V region 345 (117 aa).

An N-terminal signal peptide occupies residues 1–19 (MNFGLRLIFLVLTLKGVKC). Positions 20–49 (EVQLVESGGGLVKPGGSLKLSCAASGFAFS) are framework-1. A disulfide bond links Cys-41 and Cys-115. Positions 50–54 (SYDMS) are complementarity-determining-1. The tract at residues 55–68 (WVRQTPEKRLEWVA) is framework-2. The tract at residues 69-85 (YISSGGGSTYYPDTVKG) is complementarity-determining-2. The tract at residues 86–117 (RFTISRDNAKNTLYLQMSSLKSEDTAMYYCAR) is framework-3.

The chain is Ig heavy chain V region 345 from Mus musculus (Mouse).